A 532-amino-acid polypeptide reads, in one-letter code: Phosphoenolpyruvate carboxykinase (ATP) (532 aa).

The substrate site is built by R60, Y194, and K200. Residues K200, H219, and 237-245 (GLSGTGKTT) contribute to the ATP site. Positions 200 and 219 each coordinate Mn(2+). Residue D258 coordinates Mn(2+). Residues E286, R324, and T449 each contribute to the ATP site. R324 provides a ligand contact to substrate.

The protein belongs to the phosphoenolpyruvate carboxykinase (ATP) family. The cofactor is Mn(2+).

The protein localises to the cytoplasm. It carries out the reaction oxaloacetate + ATP = phosphoenolpyruvate + ADP + CO2. It functions in the pathway carbohydrate biosynthesis; gluconeogenesis. In terms of biological role, involved in the gluconeogenesis. Catalyzes the conversion of oxaloacetate (OAA) to phosphoenolpyruvate (PEP) through direct phosphoryl transfer between the nucleoside triphosphate and OAA. This is Phosphoenolpyruvate carboxykinase (ATP) from Ruegeria pomeroyi (strain ATCC 700808 / DSM 15171 / DSS-3) (Silicibacter pomeroyi).